The chain runs to 141 residues: Lutropin subunit beta (141 aa).

The N-terminal stretch at 1–18 is a signal peptide; it reads MGTLQGLLLWLLLGTGGA. Cystine bridges form between Cys29–Cys77, Cys43–Cys92, Cys46–Cys130, Cys54–Cys108, Cys58–Cys110, and Cys113–Cys120. Asn33 carries N-linked (GlcNAc...) asparagine glycosylation.

Belongs to the glycoprotein hormones subunit beta family. As to quaternary structure, heterodimer of a common alpha chain and a unique beta chain which confers biological specificity to thyrotropin, lutropin, follitropin and gonadotropin.

It is found in the secreted. Its function is as follows. Promotes spermatogenesis and ovulation by stimulating the testes and ovaries to synthesize steroids. In Oryctolagus cuniculus (Rabbit), this protein is Lutropin subunit beta (LHB).